The chain runs to 393 residues: Branched-chain-amino-acid aminotransferase, mitochondrial (393 aa).

The N-terminal 27 residues, 1 to 27, are a transit peptide targeting the mitochondrion; it reads MATAALRQIWIPRFLPVPWFLCGSRRY. Tyr-169 contributes to the substrate binding site. The residue at position 230 (Lys-230) is an N6-(pyridoxal phosphate)lysine. N6-acetyllysine is present on Lys-322.

This sequence belongs to the class-IV pyridoxal-phosphate-dependent aminotransferase family. In terms of assembly, homodimer. Pyridoxal 5'-phosphate is required as a cofactor.

Its subcellular location is the mitochondrion. The catalysed reaction is L-leucine + 2-oxoglutarate = 4-methyl-2-oxopentanoate + L-glutamate. It carries out the reaction L-isoleucine + 2-oxoglutarate = (S)-3-methyl-2-oxopentanoate + L-glutamate. It catalyses the reaction L-valine + 2-oxoglutarate = 3-methyl-2-oxobutanoate + L-glutamate. Functionally, catalyzes the first reaction in the catabolism of the essential branched chain amino acids leucine, isoleucine, and valine. May also function as a transporter of branched chain alpha-keto acids. In Bos taurus (Bovine), this protein is Branched-chain-amino-acid aminotransferase, mitochondrial (BCAT2).